Reading from the N-terminus, the 267-residue chain is Small ribosomal subunit protein uS2 (267 aa).

Positions 1-72 (MSGNEKEGLD…QLDEDVMPDE (72 aa)) are disordered. Acidic residues predominate over residues 10–72 (DASDSDFDPS…QLDEDVMPDE (63 aa)).

The protein belongs to the universal ribosomal protein uS2 family. Post-translationally, the N-terminus is blocked.

The protein is Small ribosomal subunit protein uS2 (rps2) of Haloarcula marismortui (strain ATCC 43049 / DSM 3752 / JCM 8966 / VKM B-1809) (Halobacterium marismortui).